A 346-amino-acid polypeptide reads, in one-letter code: MKVLGIETSCDDCCVAVVENGIHILSNIKLNQPEHKKYYGIVPEIASRLHTEAIMSVCIKALKKANTKISEIDLIAVTSRPGLIGSLIVGLNFAKGLAISLKKPIICIDHILGHLYAPLMHSKIEYPFISLLLSGGHTLIAKQKNFDDVEILGRTLDDACGEAFDKVAKHYDMGFPGGPNIEQISKNGDENTFQFPVTTFKKKENWYDFSYSGLKTACIHQLEKFKSKDNPTTKNNIAASFQKAAFENLITPLKRAIKDTQINKLVIAGGVASNLYLREKIDKLKIQTYYPPLDLCTDNGAMIAGLGFNMYLKYGESPIEIDANSRIENYKNQYRGKNNEKNFSNA.

The Fe cation site is built by His110 and His114. Substrate-binding positions include 132–136 (LLSGG), Asp165, Gly178, and Asn274. Position 298 (Asp298) interacts with Fe cation.

This sequence belongs to the KAE1 / TsaD family. Fe(2+) is required as a cofactor.

It is found in the cytoplasm. The catalysed reaction is L-threonylcarbamoyladenylate + adenosine(37) in tRNA = N(6)-L-threonylcarbamoyladenosine(37) in tRNA + AMP + H(+). Functionally, required for the formation of a threonylcarbamoyl group on adenosine at position 37 (t(6)A37) in tRNAs that read codons beginning with adenine. Is involved in the transfer of the threonylcarbamoyl moiety of threonylcarbamoyl-AMP (TC-AMP) to the N6 group of A37, together with TsaE and TsaB. TsaD likely plays a direct catalytic role in this reaction. The protein is tRNA N6-adenosine threonylcarbamoyltransferase of Borreliella burgdorferi (strain ZS7) (Borrelia burgdorferi).